A 533-amino-acid chain; its full sequence is Zinc finger protein 692 (533 aa).

Disordered stretches follow at residues 124-251 (SLIP…PATL) and 290-310 (TESLDSPGSQAQSAPNPTCDE). The span at 149–178 (EARRKQEAEGLECEHRERTQETRLSRRVEP) shows a compositional bias: basic and acidic residues. Acidic residues predominate over residues 190–208 (QVVEEEEEEEEEEEEEELL). A Phosphoserine modification is found at Ser-233. Positions 290–305 (TESLDSPGSQAQSAPN) are enriched in polar residues. C2H2-type zinc fingers lie at residues 329–354 (MPCDFPGCGRIFSNRQYLNHHKKYQH), 360–384 (FCCPEPACGKSFNFKKHLKEHVKLH), 390–412 (YICEFCARSFRTSSNLVIHRRIH), 418–440 (LQCEICGFTCRQKASLNWHRRKH), and 449–472 (FPCEFCGKRFEKPDSVVAHCSKSH). Ser-471 carries the post-translational modification Phosphoserine. A disordered region spans residues 478–533 (VQESPGSLGSSPSISAPEPLQSPEGTSFSTSYDSNPAPSTSISSPGVPAPRNTEKS). Low complexity predominate over residues 481–492 (SPGSLGSSPSIS). A compositionally biased stretch (polar residues) spans 500–521 (PEGTSFSTSYDSNPAPSTSISS).

The protein belongs to the krueppel C2H2-type zinc-finger protein family. In terms of processing, phosphorylation at Ser-471 results in loss of DNA-binding activity.

The protein resides in the nucleus. May act as an transcriptional repressor for PCK1 gene expression, in turns may participate in the hepatic gluconeogenesis regulation through the activated AMPK signaling pathway. This Rattus norvegicus (Rat) protein is Zinc finger protein 692.